Reading from the N-terminus, the 148-residue chain is DnaJ homolog subfamily C member 24 (148 aa).

The J domain maps to 10–81 (DWYSILGADP…ETKKKYDLQR (72 aa)). One can recognise a DPH-type MB domain in the interval 92–147 (VDAQVRLEEMSWNQGDESFFLSCRCGGKYTVSKDEAQEATLISCDACSLIVELLHQ). The Zn(2+) site is built by cysteine 114, cysteine 116, cysteine 135, and cysteine 138.

It belongs to the DPH4 family. Monomer and homooligomer. Iron binding promotes oligomerization. In terms of tissue distribution, detected in heart, brain, spleen, lung, liver, kidney and testis.

Its subcellular location is the cytoplasm. It localises to the cytoskeleton. It functions in the pathway protein modification; peptidyl-diphthamide biosynthesis. Its function is as follows. The iron-bound form is redox-active and can function as electron carrier. Stimulates the ATPase activity of several Hsp70-type chaperones. This ability is enhanced by iron-binding. Plays a role in the diphthamide biosynthesis, a post-translational modification of histidine which occurs in translation elongation factor 2 (EEF2). The polypeptide is DnaJ homolog subfamily C member 24 (Dnajc24) (Mus musculus (Mouse)).